Reading from the N-terminus, the 349-residue chain is uncharacterized protein (349 aa).

Residues 1-25 (MNKYIKQGAPILGILLAVMFGGREG) form the signal peptide.

Belongs to the bacterial solute-binding protein 1 family. WtpA subfamily.

This is an uncharacterized protein from Methanococcus aeolicus (strain ATCC BAA-1280 / DSM 17508 / OCM 812 / Nankai-3).